Consider the following 444-residue polypeptide: tRNA-2-methylthio-N(6)-dimethylallyladenosine synthase (444 aa).

The MTTase N-terminal domain maps to 8–122 (KTFYIETFGC…LAEMLVQIES (115 aa)). Positions 17, 53, 85, 160, 164, and 167 each coordinate [4Fe-4S] cluster. Positions 146–376 (RGNAHRGYIT…MEHQREIQRA (231 aa)) constitute a Radical SAM core domain. In terms of domain architecture, TRAM spans 379-444 (RKHIGETIEV…PNSLVGELVG (66 aa)).

It belongs to the methylthiotransferase family. MiaB subfamily. As to quaternary structure, monomer. Requires [4Fe-4S] cluster as cofactor.

Its subcellular location is the cytoplasm. It carries out the reaction N(6)-dimethylallyladenosine(37) in tRNA + (sulfur carrier)-SH + AH2 + 2 S-adenosyl-L-methionine = 2-methylsulfanyl-N(6)-dimethylallyladenosine(37) in tRNA + (sulfur carrier)-H + 5'-deoxyadenosine + L-methionine + A + S-adenosyl-L-homocysteine + 2 H(+). Functionally, catalyzes the methylthiolation of N6-(dimethylallyl)adenosine (i(6)A), leading to the formation of 2-methylthio-N6-(dimethylallyl)adenosine (ms(2)i(6)A) at position 37 in tRNAs that read codons beginning with uridine. The protein is tRNA-2-methylthio-N(6)-dimethylallyladenosine synthase of Koribacter versatilis (strain Ellin345).